A 122-amino-acid polypeptide reads, in one-letter code: Large ribosomal subunit protein uL14 (122 aa).

It belongs to the universal ribosomal protein uL14 family. As to quaternary structure, part of the 50S ribosomal subunit. Forms a cluster with proteins L3 and L19. In the 70S ribosome, L14 and L19 interact and together make contacts with the 16S rRNA in bridges B5 and B8.

Its function is as follows. Binds to 23S rRNA. Forms part of two intersubunit bridges in the 70S ribosome. The protein is Large ribosomal subunit protein uL14 of Micrococcus luteus (Micrococcus lysodeikticus).